Reading from the N-terminus, the 946-residue chain is Serine/arginine repetitive matrix protein 1 (946 aa).

M1 is modified (N-acetylmethionine). Residues 1–151 form a necessary for DNA and RNA-binding region; it reads MDAGFFRGTS…ASLKKQDEDK (151 aa). The segment at 1-156 is necessary for mRNA 3'-end cleavage and cytoplasmic accumulation; it reads MDAGFFRGTS…QDEDKDKRDK (156 aa). R7 is subject to Citrulline. The region spanning 27–126 is the PWI domain; sequence QLKFAECLEK…AGIPSAFLEL (100 aa). Residue K127 forms a Glycyl lysine isopeptide (Lys-Gly) (interchain with G-Cter in SUMO2) linkage. N6-acetyllysine is present on K140. A compositionally biased stretch (basic and acidic residues) spans 142–170; that stretch reads ASLKKQDEDKDKRDKEEKESSREKRERSR. Residues 142–946 are disordered; the sequence is ASLKKQDEDK…MRKAQVSPQS (805 aa). Residues 171-207 are compositionally biased toward basic residues; sequence SPRRRKSRSPSPRRRSSPVRRERKRSHSRSPRHRTKS. The span at 214–234 shows a compositional bias: basic and acidic residues; that stretch reads PEKKEKSPELPEPSVRMKDSS. S220 and S227 each carry phosphoserine. Residue K231 forms a Glycyl lysine isopeptide (Lys-Gly) (interchain with G-Cter in SUMO1); alternate linkage. K231 participates in a covalent cross-link: Glycyl lysine isopeptide (Lys-Gly) (interchain with G-Cter in SUMO2); alternate. A phosphoserine mark is found at S234 and S240. T241 bears the Phosphothreonine mark. Residues 246-273 show a composition bias toward basic and acidic residues; sequence KAPKPEPVPEPKEPSPEKNSKKEKEKTR. K249 is covalently cross-linked (Glycyl lysine isopeptide (Lys-Gly) (interchain with G-Cter in SUMO2)). S260 is subject to Phosphoserine. 2 stretches are compositionally biased toward basic residues: residues 274 to 327 and 334 to 349; these read PRSR…RTPP and PRHR…RRRS. The interval 298-707 is necessary for speckles and matrix localization; sequence RRHRSRSRSY…NKRHSPSPRP (410 aa). Over residues 350 to 366 the composition is skewed to low complexity; that stretch reads SASLSGSSSSSSSSRSR. S387, S389, S391, and S400 each carry phosphoserine. The residue at position 404 (T404) is a Phosphothreonine. The residue at position 412 (S412) is a Phosphoserine. T414 is subject to Phosphothreonine. Phosphoserine is present on residues S418, S427, S429, and S434. The segment covering 426–436 has biased composition (polar residues); the sequence is VSVSPGRTSGK. K445 participates in a covalent cross-link: Glycyl lysine isopeptide (Lys-Gly) (interchain with G-Cter in SUMO2). 2 positions are modified to phosphoserine: S448 and S450. A Glycyl lysine isopeptide (Lys-Gly) (interchain with G-Cter in SUMO2) cross-link involves residue K457. S461 and S463 each carry phosphoserine. A Glycyl lysine isopeptide (Lys-Gly) (interchain with G-Cter in SUMO2) cross-link involves residue K470. S476 carries the post-translational modification Phosphoserine. Positions 476-499 are enriched in low complexity; it reads SVQQRRQYRRQNQQSSSDSGSSST. Basic and acidic residues predominate over residues 501–516; sequence EDERPKRSHVKNGEVG. Phosphoserine occurs at positions 522, 524, 526, 528, 530, 561, 563, 572, and 574. The segment covering 555–572 has biased composition (basic residues); it reads SSRRRRSPSPPPARRRRS. Over residues 574–585 the composition is skewed to pro residues; sequence SPAPPPPPPPPP. The span at 586-611 shows a compositional bias: basic residues; the sequence is PRRRRSPTPPPRRRTPSPPPRRRSPS. Phosphothreonine occurs at positions 593 and 600. S602 is modified (phosphoserine). Positions 612 to 624 are enriched in low complexity; the sequence is PRRYSPPIQRRYS. Y615 is modified (phosphotyrosine). Phosphoserine occurs at positions 616, 624, and 626. T633 carries the phosphothreonine modification. A phosphoserine mark is found at S635, S645, S647, S655, and S657. Over residues 640–655 the composition is skewed to basic residues; the sequence is PKRRASPSPPPKRRVS. Residues 668–682 are compositionally biased toward basic residues; it reads TKRRSPSLSSKHRKG. A compositionally biased stretch (pro residues) spans 704–718; it reads SPRPRAPQTSSPPPV. S713, S714, S723, S725, S731, and S733 each carry phosphoserine. Residues 724-736 show a composition bias toward polar residues; sequence ASPQGRQSPSPST. Position 736 is a phosphothreonine (T736). A phosphoserine mark is found at S779, S781, S789, S793, S795, S797, S810, S814, S816, and S818. Over residues 779–800 the composition is skewed to low complexity; sequence SPSPQSVRRVSSSRSVSGSPEP. T819 is modified (phosphothreonine). A phosphoserine mark is found at S822 and S832. Residues 833 to 842 show a composition bias toward polar residues; the sequence is PTPSLSPARN. T834 bears the Phosphothreonine mark. 3 positions are modified to phosphoserine: S836, S838, and S843. Basic residues predominate over residues 850–875; sequence KKKKKKKDKKHKKDKKHKKHKKHKKE. A compositionally biased stretch (low complexity) spans 878-907; it reads VTIATPATAAPAAVSAATTTSAQEEPAAAP. T913 is modified (phosphothreonine). A Phosphoserine modification is found at S915. A compositionally biased stretch (basic and acidic residues) spans 924-934; it reads DLERHLREKAL. The residue at position 943 (S943) is a Phosphoserine.

This sequence belongs to the splicing factor SR family. In terms of assembly, identified in the spliceosome C complex. Found in a pre-mRNA splicing complex with SFRS4, SFRS5, SNRP70, SNRPA1, SRRM1 and SRRM2. Component of the minor spliceosome, which splices U12-type introns. Found in a pre-mRNA exonic splicing enhancer (ESE) complex with SNRP70, SNRPA1, SRRM1 and TRA2B/SFRS10. Found in a mRNA splicing-dependent exon junction complex (EJC) with DEK, PRPF8, NCBP1, RBM8A, RNPS1, SRRM1 and ALYREF/THOC4. Interacts with DDX39B, CPSF1, RBM8A, RNPS1, and ALYREF/THOC4. Seems to be a compound of RNA export complexes that are released from speckles in a ATP-dependent manner. Post-translationally, citrullinated by PADI4. In terms of processing, phosphorylated on multiple serine and threonine residues by DYRK3 during the G2-to-M transition, after the nuclear-envelope breakdown. Phosphorylation by DYRK3 promotes disassembly of nuclear speckles.

Its subcellular location is the nucleus matrix. The protein resides in the nucleus speckle. Its function is as follows. Part of pre- and post-splicing multiprotein mRNP complexes. As a component of the minor spliceosome, involved in the splicing of U12-type introns in pre-mRNAs. Involved in numerous pre-mRNA processing events. Promotes constitutive and exonic splicing enhancer (ESE)-dependent splicing activation by bridging together sequence-specific (SR family proteins, SFRS4, SFRS5 and TRA2B/SFRS10) and basal snRNP (SNRP70 and SNRPA1) factors of the spliceosome. Stimulates mRNA 3'-end cleavage independently of the formation of an exon junction complex. Binds both pre-mRNA and spliced mRNA 20-25 nt upstream of exon-exon junctions. Binds RNA and DNA with low sequence specificity and has similar preference for either double- or single-stranded nucleic acid substrates. The chain is Serine/arginine repetitive matrix protein 1 (Srrm1) from Mus musculus (Mouse).